The primary structure comprises 75 residues: Small ribosomal subunit protein eS17 (75 aa).

This sequence belongs to the eukaryotic ribosomal protein eS17 family.

The protein is Small ribosomal subunit protein eS17 of Thermoplasma acidophilum (strain ATCC 25905 / DSM 1728 / JCM 9062 / NBRC 15155 / AMRC-C165).